The sequence spans 259 residues: Tryptophan synthase alpha chain (259 aa).

Catalysis depends on proton acceptor residues Glu42 and Asp53.

It belongs to the TrpA family. Tetramer of two alpha and two beta chains.

It catalyses the reaction (1S,2R)-1-C-(indol-3-yl)glycerol 3-phosphate + L-serine = D-glyceraldehyde 3-phosphate + L-tryptophan + H2O. The protein operates within amino-acid biosynthesis; L-tryptophan biosynthesis; L-tryptophan from chorismate: step 5/5. The alpha subunit is responsible for the aldol cleavage of indoleglycerol phosphate to indole and glyceraldehyde 3-phosphate. The polypeptide is Tryptophan synthase alpha chain (Erythrobacter litoralis (strain HTCC2594)).